The primary structure comprises 948 residues: Isoleucine--tRNA ligase (948 aa).

The 'HIGH' region signature appears at 58–68 (PYANGDIHIGH). Residue glutamate 566 participates in L-isoleucyl-5'-AMP binding. A 'KMSKS' region motif is present at residues 607–611 (KMSKS). Residue lysine 610 coordinates ATP. Zn(2+) is bound by residues cysteine 911, cysteine 914, cysteine 931, and cysteine 934.

The protein belongs to the class-I aminoacyl-tRNA synthetase family. IleS type 1 subfamily. Monomer. The cofactor is Zn(2+).

It is found in the cytoplasm. The catalysed reaction is tRNA(Ile) + L-isoleucine + ATP = L-isoleucyl-tRNA(Ile) + AMP + diphosphate. Its function is as follows. Catalyzes the attachment of isoleucine to tRNA(Ile). As IleRS can inadvertently accommodate and process structurally similar amino acids such as valine, to avoid such errors it has two additional distinct tRNA(Ile)-dependent editing activities. One activity is designated as 'pretransfer' editing and involves the hydrolysis of activated Val-AMP. The other activity is designated 'posttransfer' editing and involves deacylation of mischarged Val-tRNA(Ile). This chain is Isoleucine--tRNA ligase, found in Vibrio vulnificus (strain CMCP6).